The sequence spans 612 residues: Glutamine--fructose-6-phosphate aminotransferase [isomerizing] (612 aa).

Cys-2 functions as the Nucleophile; for GATase activity in the catalytic mechanism. In terms of domain architecture, Glutamine amidotransferase type-2 spans 2–220 (CGIVGAIRAH…DGDIALLASD (219 aa)). SIS domains lie at 288-428 (AKSV…VRGL) and 461-602 (WAQQ…VDKP). The For Fru-6P isomerization activity role is filled by Lys-607.

Homodimer.

The protein resides in the cytoplasm. It catalyses the reaction D-fructose 6-phosphate + L-glutamine = D-glucosamine 6-phosphate + L-glutamate. Catalyzes the first step in hexosamine metabolism, converting fructose-6P into glucosamine-6P using glutamine as a nitrogen source. This chain is Glutamine--fructose-6-phosphate aminotransferase [isomerizing], found in Neisseria meningitidis serogroup B (strain ATCC BAA-335 / MC58).